The following is a 1043-amino-acid chain: Integrator complex subunit 3 (1043 aa).

Met-1 carries the N-acetylmethionine modification. Phosphoserine is present on residues Ser-502, Ser-537, and Ser-995. A disordered region spans residues 977–1043 (YEDSSTKPPK…GSSAVGSDSD (67 aa)). Positions 1008–1022 (AEEESGSSSASEEED) are enriched in acidic residues.

Belongs to the Integrator subunit 3 family. In terms of assembly, component of the Integrator complex, composed of core subunits INTS1, INTS2, INTS3, INTS4, INTS5, INTS6, INTS7, INTS8, INTS9/RC74, INTS10, INTS11/CPSF3L, INTS12, INTS13, INTS14 and INTS15. The core complex associates with protein phosphatase 2A subunits PPP2CA and PPP2R1A, to form the Integrator-PP2A (INTAC) complex. Component of the SOSS complex, composed of SOSS-B (SOSS-B1/NABP2 or SOSS-B2/NABP1), SOSS-A/INTS3 and SOSS-C/INIP. SOSS complexes containing SOSS-B1/NABP2 are more abundant than complexes containing SOSS-B2/NABP1. Interacts with SOSS-B1/NABP2, SOSS-B2/NABP1 and SOSS-C/INIP; the interaction is direct. Interacts with NBN/NBS1.

It is found in the nucleus. It localises to the cytoplasm. Functionally, component of the integrator complex, a multiprotein complex that terminates RNA polymerase II (Pol II) transcription in the promoter-proximal region of genes. The integrator complex provides a quality checkpoint during transcription elongation by driving premature transcription termination of transcripts that are unfavorably configured for transcriptional elongation: the complex terminates transcription by (1) catalyzing dephosphorylation of the C-terminal domain (CTD) of Pol II subunit POLR2A/RPB1 and SUPT5H/SPT5, (2) degrading the exiting nascent RNA transcript via endonuclease activity and (3) promoting the release of Pol II from bound DNA. The integrator complex is also involved in terminating the synthesis of non-coding Pol II transcripts, such as enhancer RNAs (eRNAs), small nuclear RNAs (snRNAs), telomerase RNAs and long non-coding RNAs (lncRNAs). Within the integrator complex, INTS3 is involved in the post-termination step: INTS3 binds INTS7 in the open conformation of integrator complex and prevents the rebinding of Pol II to the integrator after termination cycle. Mediates recruitment of cytoplasmic dynein to the nuclear envelope, probably as component of the integrator complex. Component of the SOSS complex, a multiprotein complex that functions downstream of the MRN complex to promote DNA repair and G2/M checkpoint. The SOSS complex associates with single-stranded DNA at DNA lesions and influences diverse endpoints in the cellular DNA damage response including cell-cycle checkpoint activation, recombinational repair and maintenance of genomic stability. The SOSS complex is required for efficient homologous recombination-dependent repair of double-strand breaks (DSBs) and ATM-dependent signaling pathways. In the SOSS complex, it is required for the assembly of the complex and for stabilization of the complex at DNA damage sites. This chain is Integrator complex subunit 3, found in Homo sapiens (Human).